Consider the following 303-residue polypeptide: Probable alpha-L-glutamate ligase 1 (303 aa).

An ATP-grasp domain is found at 104–287 (LQLLSRKGVG…IAGLIYSFIE (184 aa)). Residues K141, 178 to 179 (EF), D187, and 211 to 213 (RSN) each bind ATP. Mg(2+) is bound by residues D248, E260, and N262. Residues D248, E260, and N262 each coordinate Mn(2+).

The protein belongs to the RimK family. It depends on Mg(2+) as a cofactor. The cofactor is Mn(2+).

The protein is Probable alpha-L-glutamate ligase 1 of Hahella chejuensis (strain KCTC 2396).